Here is a 351-residue protein sequence, read N- to C-terminus: uncharacterized protein (351 aa).

Mn(2+)-binding residues include D215, D226, H290, E319, and E333.

The protein belongs to the peptidase M24B family. Mn(2+) serves as cofactor.

This is an uncharacterized protein from Staphylococcus aureus (strain MRSA252).